A 383-amino-acid chain; its full sequence is tRNA-specific 2-thiouridylase MnmA (383 aa).

ATP is bound by residues 31–38 (GLSGGVDS) and L57. Residue C118 is the Nucleophile of the active site. Cysteines 118 and 217 form a disulfide. G143 provides a ligand contact to ATP. The interval 167–169 (KDQ) is interaction with tRNA. C217 acts as the Cysteine persulfide intermediate in catalysis. The tract at residues 322–323 (RY) is interaction with tRNA.

Belongs to the MnmA/TRMU family.

The protein resides in the cytoplasm. The enzyme catalyses S-sulfanyl-L-cysteinyl-[protein] + uridine(34) in tRNA + AH2 + ATP = 2-thiouridine(34) in tRNA + L-cysteinyl-[protein] + A + AMP + diphosphate + H(+). Functionally, catalyzes the 2-thiolation of uridine at the wobble position (U34) of tRNA, leading to the formation of s(2)U34. The chain is tRNA-specific 2-thiouridylase MnmA from Synechococcus sp. (strain RCC307).